Consider the following 323-residue polypeptide: MRLIFAGTPEFARVALAQLHAGGHEIALVLTQPDRPAGRGMKLQASAVKQFALDHGLALAQPRSLRLDGKYPEDAAAAREALVAAQADAMVVAAYGLILPQWVLDVPARGCFNIHASLLPRWRGAAPIHRAIEAGDAQTGVTIMQMDAGLDTGAMLQAQAIPIGAGDTTGSLHDRLAELGAQLMLQVLAQAVHGSLQPVAQAAQGVTYAPKIEKHEAAIDWTQPAAVIAQRIRAFNPFPGATAVLNGETLKIWLADVAPGVPPVSKEFGSILAVAPVGIEVVAMKSIVNITQLQRPGGKRLGVAEFLRGFDLQPGMVFERHGS.

117–120 (SLLP) provides a ligand contact to (6S)-5,6,7,8-tetrahydrofolate.

The protein belongs to the Fmt family.

The enzyme catalyses L-methionyl-tRNA(fMet) + (6R)-10-formyltetrahydrofolate = N-formyl-L-methionyl-tRNA(fMet) + (6S)-5,6,7,8-tetrahydrofolate + H(+). Attaches a formyl group to the free amino group of methionyl-tRNA(fMet). The formyl group appears to play a dual role in the initiator identity of N-formylmethionyl-tRNA by promoting its recognition by IF2 and preventing the misappropriation of this tRNA by the elongation apparatus. This is Methionyl-tRNA formyltransferase from Albidiferax ferrireducens (strain ATCC BAA-621 / DSM 15236 / T118) (Rhodoferax ferrireducens).